Here is a 345-residue protein sequence, read N- to C-terminus: 4-hydroxy-3-methylbut-2-en-1-yl diphosphate synthase (flavodoxin) (345 aa).

[4Fe-4S] cluster contacts are provided by Cys-271, Cys-274, Cys-306, and Glu-313.

It belongs to the IspG family. [4Fe-4S] cluster is required as a cofactor.

It catalyses the reaction (2E)-4-hydroxy-3-methylbut-2-enyl diphosphate + oxidized [flavodoxin] + H2O + 2 H(+) = 2-C-methyl-D-erythritol 2,4-cyclic diphosphate + reduced [flavodoxin]. The protein operates within isoprenoid biosynthesis; isopentenyl diphosphate biosynthesis via DXP pathway; isopentenyl diphosphate from 1-deoxy-D-xylulose 5-phosphate: step 5/6. Converts 2C-methyl-D-erythritol 2,4-cyclodiphosphate (ME-2,4cPP) into 1-hydroxy-2-methyl-2-(E)-butenyl 4-diphosphate. The protein is 4-hydroxy-3-methylbut-2-en-1-yl diphosphate synthase (flavodoxin) of Haemophilus influenzae (strain PittEE).